The primary structure comprises 272 residues: MDAQSAAKCLTAVRRHSPLVHSITNNVVTNFTANGLLALGASPVMAYAKEEVADMAKIAGALVLNIGTLSKESVEAMIIAGKSANEHGVPVILDPVGAGATPFRTESARDIIREVRLAAIRGNAAEIAHTVGVTDWLIKGVDAGEGGGDIIRLAQQAAQKLNTVIAITGEVDVIADTSHVYTLHNGHKLLTKVTGAGCLLTSVVGAFCAVEENPLFAAIAAISSYGVAAQLAAQQTADKGPGSFQIELLNKLSTVTEQDVQEWATIERVTVS.

Position 45 (Met45) interacts with substrate. ATP contacts are provided by Arg121 and Thr168. Gly195 is a substrate binding site.

This sequence belongs to the Thz kinase family. In terms of assembly, homotrimer. Mg(2+) serves as cofactor.

The catalysed reaction is 5-(2-hydroxyethyl)-4-methylthiazole + ATP = 4-methyl-5-(2-phosphooxyethyl)-thiazole + ADP + H(+). It participates in cofactor biosynthesis; thiamine diphosphate biosynthesis; 4-methyl-5-(2-phosphoethyl)-thiazole from 5-(2-hydroxyethyl)-4-methylthiazole: step 1/1. Functionally, catalyzes the phosphorylation of the hydroxyl group of 4-methyl-5-beta-hydroxyethylthiazole (THZ). This is Hydroxyethylthiazole kinase from Bacillus subtilis (strain 168).